The sequence spans 67 residues: MIIPIRCFTCGKVIGNKWESYLGLLQAEYTEGDALDALGLKRYCCRRMLLGHVDLIEKLLNYAPLEK.

Residues C7, C10, C44, and C45 each contribute to the Zn(2+) site.

It belongs to the archaeal Rpo10/eukaryotic RPB10 RNA polymerase subunit family. As to quaternary structure, component of the RNA polymerase I (Pol I), RNA polymerase II (Pol II) and RNA polymerase III (Pol III) complexes consisting of at least 13, 12 and 17 subunits, respectively.

The protein resides in the nucleus. In terms of biological role, DNA-dependent RNA polymerase catalyzes the transcription of DNA into RNA using the four ribonucleoside triphosphates as substrates. Common component of RNA polymerases I, II and III which synthesize ribosomal RNA precursors, mRNA precursors and many functional non-coding RNAs, and a small RNAs, such as 5S rRNA and tRNAs, respectively. Pol II is the central component of the basal RNA polymerase II transcription machinery. Pols are composed of mobile elements that move relative to each other. In Pol II, Polr2L is part of the core element with the central large cleft. This chain is DNA-directed RNA polymerases I, II, and III subunit RPABC5, found in Drosophila melanogaster (Fruit fly).